Reading from the N-terminus, the 1662-residue chain is Cortactin-binding protein 2 (1662 aa).

Disordered regions lie at residues M1–A23, K203–E222, S361–G440, G454–R479, and R498–D618. Residues K119–K276 are a coiled coil. The segment covering P386–S396 has biased composition (low complexity). Residues Q411 to A422 show a composition bias toward polar residues. R498 is subject to Asymmetric dimethylarginine. Polar residues predominate over residues T583–V597. ANK repeat units lie at residues G709 to Y739, D743 to A772, N776 to H805, G809 to V838, D842 to G871, and E912 to R942. The tract at residues G1450–W1474 is disordered. Residue S1524 is modified to Phosphoserine. Disordered stretches follow at residues S1580–T1602 and S1618–K1662. Over residues K1582–K1599 the composition is skewed to polar residues. The span at S1624–Q1638 shows a compositional bias: low complexity. A compositionally biased stretch (polar residues) spans I1639–N1648. Over residues W1649 to K1662 the composition is skewed to basic and acidic residues.

Interacts with CTTN/cortactin SH3 domain. Interacts with STRN, STRN4/zinedin and MOB4/phocein; this interactions mediate the association with the STRIPAK core complex and may regulate dendritic spine distribution of the STRIPAK complex in hippocampal neurons. Activation of glutamate receptors weakens the interaction with STRN and STRN4.

It is found in the cytoplasm. The protein localises to the cell cortex. Its subcellular location is the cell projection. It localises to the dendritic spine. Regulates the dendritic spine distribution of CTTN/cortactin in hippocampal neurons, and thus controls dendritic spinogenesis and dendritic spine maintenance. Associates with the striatin-interacting phosphatase and kinase (STRIPAK) core complex to regulate dendritic spine distribution of the STRIPAK complex in hippocampal neurons. The protein is Cortactin-binding protein 2 (CTTNBP2) of Chlorocebus aethiops (Green monkey).